We begin with the raw amino-acid sequence, 183 residues long: Glutathione-regulated potassium-efflux system ancillary protein KefG (183 aa).

Belongs to the NAD(P)H dehydrogenase (quinone) family. KefG subfamily. Interacts with KefB.

Its subcellular location is the cell inner membrane. The catalysed reaction is a quinone + NADH + H(+) = a quinol + NAD(+). It carries out the reaction a quinone + NADPH + H(+) = a quinol + NADP(+). In terms of biological role, regulatory subunit of a potassium efflux system that confers protection against electrophiles. Required for full activity of KefB. In Salmonella enteritidis PT4 (strain P125109), this protein is Glutathione-regulated potassium-efflux system ancillary protein KefG.